The following is a 194-amino-acid chain: Cysteine and glycine-rich protein 3 (194 aa).

An interaction with TCAP region spans residues 1–5; the sequence is MPNWG. Residues 10 to 61 form the LIM zinc-binding 1 domain; that stretch reads CGACEKTVYHAEEIQCNGRSFHKTCFHCMACRKALDSTTVAAHESEIYCKVC. The short motif at 64–69 is the Nuclear localization signal element; that stretch reads RRYGPK. An interaction with CLF2 region spans residues 94–105; that stretch reads QSPKPARAATTS. Phosphoserine occurs at positions 95, 111, and 153. Residues 120 to 171 enclose the LIM zinc-binding 2 domain; the sequence is CPRCGKSVYAAEKVMGGGKPWHKTCFRCAICGKSLESTNVTDKDGELYCKVC.

In terms of assembly, self-associates. Oligomeric in the cytoplasm and monomeric in the nucleus. Homooligomers preferentially form along the actin cytoskeleton. Interacts with TCAP. Interacts with LDHD, MYOD1, MYOG, ACTN2, NRAP, MYF6. Interacts (via N-terminus)D with GLRX3 (via C-terminus) and PPP3CA; GLRX3 and calcineurin compete for interaction with CSRP3. Interacts with CFL2; the stoichiometry influences F-actin depolymerization and possibly two molecules of CFL2 can interact with one molecule of CSRP3 resulting in the highest functional impact; the interaction is stronger with phosphorylated CFL2. Post-translationally, phosphorylated by PKC/PRKCA.

Its subcellular location is the nucleus. The protein resides in the cytoplasm. It localises to the cytoskeleton. It is found in the myofibril. The protein localises to the sarcomere. Its subcellular location is the z line. Positive regulator of myogenesis. Acts as a cofactor for myogenic bHLH transcription factors such as MYOD1, and probably MYOG and MYF6. Enhances the DNA-binding activity of the MYOD1:TCF3 isoform E47 complex and may promote formation of a functional MYOD1:TCF3 isoform E47:MEF2A complex involved in myogenesis. Plays a crucial and specific role in the organization of cytosolic structures in cardiomyocytes. Could play a role in mechanical stretch sensing. May be a scaffold protein that promotes the assembly of interacting proteins at Z-line structures. It is essential for calcineurin anchorage to the Z line. Required for stress-induced calcineurin-NFAT activation. The role in regulation of cytoskeleton dynamics by association with CFL2 is reported conflictingly. Proposed to contribute to the maintenance of muscle cell integrity through an actin-based mechanism. Can directly bind to actin filaments, cross-link actin filaments into bundles without polarity selectivity and protect them from dilution- and cofilin-mediated depolymerization; the function seems to involve its self-association. In vitro can inhibit PKC/PRKCA activity. Proposed to be involved in cardiac stress signaling by down-regulating excessive PKC/PRKCA signaling. The sequence is that of Cysteine and glycine-rich protein 3 (Csrp3) from Mus musculus (Mouse).